Reading from the N-terminus, the 276-residue chain is Phosphatidylcholine synthase (276 aa).

The Cytoplasmic portion of the chain corresponds to 1–30 (MGGQKEMADSVKTKLTGKLKAKKVTAPQAK). The helical transmembrane segment at 31–51 (AFSVHLLTASGSFLAFLSVVA) threads the bilayer. The Periplasmic segment spans residues 52–57 (ASDGRY). A helical membrane pass occupies residues 58–78 (TAMWWWLGLALFVDGIDGPIA). Topologically, residues 79–91 (RKLEVKYVLPNWS) are cytoplasmic. Residues 92-112 (GELLDSIIDYVTYVLIPAFAL) traverse the membrane as a helical segment. Over 113-115 (YQS) the chain is Periplasmic. Residues 116–136 (GFMGTNLSFISGAIIVVSSAI) traverse the membrane as a helical segment. Residues 137 to 146 (YYADTGMKTK) lie on the Cytoplasmic side of the membrane. A helical transmembrane segment spans residues 147 to 167 (ENFFKGFPVVWNMVVFTLFIV). The Periplasmic segment spans residues 168–171 (RPGE). A helical membrane pass occupies residues 172-192 (WVAFGTVVASAILSFLPINFL). Residues 193 to 202 (HPVRVVRLRP) lie on the Cytoplasmic side of the membrane. Residues 203–223 (LNLTIFLLWCAFGVIALYYML) traverse the membrane as a helical segment. Topologically, residues 224–230 (DAPLWVR) are periplasmic. A helical transmembrane segment spans residues 231 to 251 (IGISVTGLYIYFIGAIMQLFP). The Cytoplasmic segment spans residues 252 to 276 (SLGREAALAKARKLVEKQQKSGEAP).

The protein belongs to the CDP-alcohol phosphatidyltransferase class-I family. The cofactor is Mn(2+).

It is found in the cell inner membrane. It catalyses the reaction a CDP-1,2-diacyl-sn-glycerol + choline = a 1,2-diacyl-sn-glycero-3-phosphocholine + CMP + H(+). Functionally, condenses choline with CDP-diglyceride to produce phosphatidylcholine and CMP. The polypeptide is Phosphatidylcholine synthase (Brucella melitensis biotype 1 (strain ATCC 23456 / CCUG 17765 / NCTC 10094 / 16M)).